Consider the following 149-residue polypeptide: Large ribosomal subunit protein bL9 (149 aa).

Belongs to the bacterial ribosomal protein bL9 family.

Binds to the 23S rRNA. This is Large ribosomal subunit protein bL9 (rplI) from Geobacillus stearothermophilus (Bacillus stearothermophilus).